The sequence spans 212 residues: Cytidylate kinase (212 aa).

Position 7-15 (7-15 (GPAASGKGT)) interacts with ATP.

The protein belongs to the cytidylate kinase family. Type 1 subfamily.

Its subcellular location is the cytoplasm. The enzyme catalyses CMP + ATP = CDP + ADP. The catalysed reaction is dCMP + ATP = dCDP + ADP. The chain is Cytidylate kinase from Bradyrhizobium diazoefficiens (strain JCM 10833 / BCRC 13528 / IAM 13628 / NBRC 14792 / USDA 110).